Reading from the N-terminus, the 345-residue chain is Phosphoribosylformylglycinamidine cyclo-ligase (345 aa).

The protein belongs to the AIR synthase family.

It is found in the cytoplasm. It catalyses the reaction 2-formamido-N(1)-(5-O-phospho-beta-D-ribosyl)acetamidine + ATP = 5-amino-1-(5-phospho-beta-D-ribosyl)imidazole + ADP + phosphate + H(+). It functions in the pathway purine metabolism; IMP biosynthesis via de novo pathway; 5-amino-1-(5-phospho-D-ribosyl)imidazole from N(2)-formyl-N(1)-(5-phospho-D-ribosyl)glycinamide: step 2/2. In Shewanella loihica (strain ATCC BAA-1088 / PV-4), this protein is Phosphoribosylformylglycinamidine cyclo-ligase.